We begin with the raw amino-acid sequence, 377 residues long: 3-dehydroquinate synthase (377 aa).

NAD(+)-binding positions include 113 to 117, 137 to 138, Lys150, and Lys159; these read GVIGD and TT. Positions 192, 254, and 273 each coordinate Zn(2+).

It belongs to the sugar phosphate cyclases superfamily. Dehydroquinate synthase family. Requires Co(2+) as cofactor. The cofactor is Zn(2+). NAD(+) is required as a cofactor.

The protein localises to the cytoplasm. It carries out the reaction 7-phospho-2-dehydro-3-deoxy-D-arabino-heptonate = 3-dehydroquinate + phosphate. The protein operates within metabolic intermediate biosynthesis; chorismate biosynthesis; chorismate from D-erythrose 4-phosphate and phosphoenolpyruvate: step 2/7. Its function is as follows. Catalyzes the conversion of 3-deoxy-D-arabino-heptulosonate 7-phosphate (DAHP) to dehydroquinate (DHQ). The protein is 3-dehydroquinate synthase of Bartonella tribocorum (strain CIP 105476 / IBS 506).